Consider the following 396-residue polypeptide: L-lactate dehydrogenase (396 aa).

The FMN hydroxy acid dehydrogenase domain maps to 1–380 (MIISAASDYR…SRDSLVQELG (380 aa)). Substrate is bound at residue Tyr-24. FMN is bound by residues Ser-106 and Gln-127. Tyr-129 serves as a coordination point for substrate. Position 155 (Thr-155) interacts with FMN. Arg-164 contributes to the substrate binding site. Residue Lys-251 coordinates FMN. Catalysis depends on His-275, which acts as the Proton acceptor. Position 278 (Arg-278) interacts with substrate. 306–330 (DSGIRNGLDVVRMIALGADSVLLGR) provides a ligand contact to FMN.

It belongs to the FMN-dependent alpha-hydroxy acid dehydrogenase family. FMN serves as cofactor.

The protein resides in the cell inner membrane. It carries out the reaction (S)-lactate + A = pyruvate + AH2. Functionally, catalyzes the conversion of L-lactate to pyruvate. Is coupled to the respiratory chain. In Citrobacter koseri (strain ATCC BAA-895 / CDC 4225-83 / SGSC4696), this protein is L-lactate dehydrogenase.